Consider the following 217-residue polypeptide: Probable GTP-binding protein EngB (217 aa).

Positions 37 to 214 (AGVEVAFAGR…RAAMARLIGE (178 aa)) constitute an EngB-type G domain. GTP contacts are provided by residues 45-52 (GRSNVGKS), 72-76 (GRTQE), 92-95 (DMPG), 159-162 (TKAD), and 193-195 (TSS). Residues S52 and T74 each coordinate Mg(2+).

It belongs to the TRAFAC class TrmE-Era-EngA-EngB-Septin-like GTPase superfamily. EngB GTPase family. Requires Mg(2+) as cofactor.

In terms of biological role, necessary for normal cell division and for the maintenance of normal septation. This is Probable GTP-binding protein EngB from Nitrobacter hamburgensis (strain DSM 10229 / NCIMB 13809 / X14).